We begin with the raw amino-acid sequence, 702 residues long: Elongation factor G (702 aa).

In terms of domain architecture, tr-type G spans 8–290; the sequence is ERYRNIGISA…AVIDYLPSPV (283 aa). Residues 17–24, 88–92, and 142–145 each bind GTP; these read AHIDAGKT, DTPGH, and NKMD.

This sequence belongs to the TRAFAC class translation factor GTPase superfamily. Classic translation factor GTPase family. EF-G/EF-2 subfamily.

It is found in the cytoplasm. Functionally, catalyzes the GTP-dependent ribosomal translocation step during translation elongation. During this step, the ribosome changes from the pre-translocational (PRE) to the post-translocational (POST) state as the newly formed A-site-bound peptidyl-tRNA and P-site-bound deacylated tRNA move to the P and E sites, respectively. Catalyzes the coordinated movement of the two tRNA molecules, the mRNA and conformational changes in the ribosome. The chain is Elongation factor G from Acidovorax ebreus (strain TPSY) (Diaphorobacter sp. (strain TPSY)).